The chain runs to 291 residues: ATP synthase gamma chain (291 aa).

It belongs to the ATPase gamma chain family. In terms of assembly, F-type ATPases have 2 components, CF(1) - the catalytic core - and CF(0) - the membrane proton channel. CF(1) has five subunits: alpha(3), beta(3), gamma(1), delta(1), epsilon(1). CF(0) has three main subunits: a, b and c.

It is found in the cell membrane. Functionally, produces ATP from ADP in the presence of a proton gradient across the membrane. The gamma chain is believed to be important in regulating ATPase activity and the flow of protons through the CF(0) complex. This is ATP synthase gamma chain from Streptococcus pyogenes serotype M1.